Reading from the N-terminus, the 276-residue chain is Large ribosomal subunit protein uL2 (276 aa).

The tract at residues 224–276 (AMNPIDHPHGGGEGKTSGGRNPVTPWGVPTKGKKTRKRNKSSNKYIKRVSDKG) is disordered. A compositionally biased stretch (basic residues) spans 254–270 (KGKKTRKRNKSSNKYIK).

The protein belongs to the universal ribosomal protein uL2 family. In terms of assembly, part of the 50S ribosomal subunit. Forms a bridge to the 30S subunit in the 70S ribosome.

Functionally, one of the primary rRNA binding proteins. Required for association of the 30S and 50S subunits to form the 70S ribosome, for tRNA binding and peptide bond formation. It has been suggested to have peptidyltransferase activity; this is somewhat controversial. Makes several contacts with the 16S rRNA in the 70S ribosome. The polypeptide is Large ribosomal subunit protein uL2 (Ehrlichia canis (strain Jake)).